Reading from the N-terminus, the 617-residue chain is Arrestin domain-containing protein B (617 aa).

Residues 1–109 (MDNRGLRLFI…ATFGQTDKWL (109 aa)) enclose the C2 domain. Positions 20, 27, 76, 78, and 84 each coordinate Ca(2+).

Belongs to the arrestin family. Ca(2+) is required as a cofactor.

The protein is Arrestin domain-containing protein B (adcB) of Dictyostelium discoideum (Social amoeba).